The sequence spans 352 residues: Peptide chain release factor 1 (352 aa).

Gln233 carries the N5-methylglutamine modification. Positions 288-309 (NAKDRKEQVGSGDRSERIRTYN) are disordered. A compositionally biased stretch (basic and acidic residues) spans 289–306 (AKDRKEQVGSGDRSERIR).

Belongs to the prokaryotic/mitochondrial release factor family. Post-translationally, methylated by PrmC. Methylation increases the termination efficiency of RF1.

It localises to the cytoplasm. In terms of biological role, peptide chain release factor 1 directs the termination of translation in response to the peptide chain termination codons UAG and UAA. The polypeptide is Peptide chain release factor 1 (Helicobacter pylori (strain Shi470)).